We begin with the raw amino-acid sequence, 210 residues long: Interleukin-6 (210 aa).

The signal sequence occupies residues 1-25 (MNSLSTSAFSPVAFSLGLLLVMATA). Cysteines 72 and 78 form a disulfide. Ser-81 is modified (phosphoserine). The cysteines at positions 101 and 111 are disulfide-linked.

The protein belongs to the IL-6 superfamily. In terms of assembly, component of a hexamer of two molecules each of IL6, IL6R and IL6ST; first binds to IL6R to associate with the signaling subunit IL6ST. Interacts with IL6R (via the N-terminal ectodomain); this interaction may be affected by IL6R-binding with SORL1, hence decreasing IL6 cis signaling. Interacts with SORL1 (via the N-terminal ectodomain); this interaction leads to IL6 internalization and lysosomal degradation. May form a trimeric complex with the soluble SORL1 ectodomain and soluble IL6R receptor; this interaction might stabilize circulating IL6, hence promoting IL6 trans signaling.

It localises to the secreted. Its function is as follows. Cytokine with a wide variety of biological functions in immunity, tissue regeneration, and metabolism. Binds to IL6R, then the complex associates to the signaling subunit IL6ST/gp130 to trigger the intracellular IL6-signaling pathway. The interaction with the membrane-bound IL6R and IL6ST stimulates 'classic signaling', whereas the binding of IL6 and soluble IL6R to IL6ST stimulates 'trans-signaling'. Alternatively, 'cluster signaling' occurs when membrane-bound IL6:IL6R complexes on transmitter cells activate IL6ST receptors on neighboring receiver cells. Functionally, IL6 is a potent inducer of the acute phase response. Rapid production of IL6 contributes to host defense during infection and tissue injury, but excessive IL6 synthesis is involved in disease pathology. In the innate immune response, is synthesized by myeloid cells, such as macrophages and dendritic cells, upon recognition of pathogens through toll-like receptors (TLRs) at the site of infection or tissue injury. In the adaptive immune response, is required for the differentiation of B cells into immunoglobulin-secreting cells. Plays a major role in the differentiation of CD4(+) T cell subsets. Essential factor for the development of T follicular helper (Tfh) cells that are required for the induction of germinal-center formation. Required to drive naive CD4(+) T cells to the Th17 lineage. Also required for proliferation of myeloma cells and the survival of plasmablast cells. Acts as an essential factor in bone homeostasis and on vessels directly or indirectly by induction of VEGF, resulting in increased angiogenesis activity and vascular permeability. Induces, through 'trans-signaling' and synergistically with IL1B and TNF, the production of VEGF. Involved in metabolic controls, is discharged into the bloodstream after muscle contraction increasing lipolysis and improving insulin resistance. 'Trans-signaling' in central nervous system also regulates energy and glucose homeostasis. Mediates, through GLP-1, crosstalk between insulin-sensitive tissues, intestinal L cells and pancreatic islets to adapt to changes in insulin demand. Also acts as a myokine. Plays a protective role during liver injury, being required for maintenance of tissue regeneration. Also has a pivotal role in iron metabolism by regulating HAMP/hepcidin expression upon inflammation or bacterial infection. Through activation of IL6ST-YAP-NOTCH pathway, induces inflammation-induced epithelial regeneration. The sequence is that of Interleukin-6 (IL6) from Mustela putorius furo (European domestic ferret).